The sequence spans 451 residues: Sterol 14alpha-demethylase (451 aa).

Heme b is bound by residues Gln-72, Tyr-76, Lys-97, Arg-326, His-392, and Cys-394.

Belongs to the cytochrome P450 family. Homodimer. It depends on heme b as a cofactor.

It localises to the cytoplasm. The catalysed reaction is a 14alpha-methyl steroid + 6 reduced [2Fe-2S]-[ferredoxin] + 3 O2 + 5 H(+) = a Delta(14) steroid + formate + 6 oxidized [2Fe-2S]-[ferredoxin] + 4 H2O. With respect to regulation, inhibited by alpha-ethyl-N-4-pyridinyl-benzeneacetamide (EPBA) and 4,4'-dihydroxybenzophenone (DHBP). In terms of biological role, sterol 14alpha-demethylase whose physiological substrate is not known. Accepts electrons from the iron-sulfur ferredoxin Fdx encoded by an adjacent gene. In vitro, catalyzes C14-demethylation of lanosterol, 24,25-dihydrolanosterol and obtusifoliol, to produce the 8,14-dienes stereoselectively. The sequence is that of Sterol 14alpha-demethylase (cyp51) from Mycobacterium tuberculosis (strain ATCC 25618 / H37Rv).